The sequence spans 405 residues: Interferon alpha/beta receptor 1a (405 aa).

A signal peptide spans 1-20 (MKVGFALVLLWSLPITNVLA). Over 21 to 233 (ELPQPQNLTL…QTEGDTPYGQ (213 aa)) the chain is Extracellular. 2 consecutive Fibronectin type-III domains span residues 22 to 123 (LPQP…IDAS) and 126 to 228 (PPSR…TEGD). Residues Asn27 and Asn70 are each glycosylated (N-linked (GlcNAc...) asparagine). Intrachain disulfides connect Cys75/Cys83 and Cys201/Cys222. Asn212 carries N-linked (GlcNAc...) asparagine glycosylation. The chain crosses the membrane as a helical span at residues 234-254 (IFLYFLVSMMVCFLLVLLSSY). Residues 255–405 (AFFRFYRGLK…LDEGVVDICV (151 aa)) lie on the Cytoplasmic side of the membrane. The segment at 325-374 (TAPPSELEQDSGRRIRQDSGDSGIYSTEGGSAQQGRSGGEPIRRDQEVDS) is disordered. Residues 334–343 (DSGRRIRQDS) show a composition bias toward basic and acidic residues. Residues 348-359 (IYSTEGGSAQQG) show a composition bias toward polar residues.

Belongs to the type II cytokine receptor family. In terms of assembly, heterodimer with IFNAR2; forming the receptor for type I interferon.

Its subcellular location is the cell membrane. Functionally, together with IFNAR2, forms the heterodimeric receptor for type I interferons (including interferons alpha, beta, epsilon, omega and kappa). Type I interferon binding activates the JAK-STAT signaling cascade, resulting in transcriptional activation or repression of interferon-regulated genes that encode the effectors of the interferon response. Mechanistically, type I interferon-binding brings the IFNAR1 and IFNAR2 subunits into close proximity with one another, driving their associated Janus kinases (JAKs) (TYK2 bound to IFNAR1 and JAK1 bound to IFNAR2) to cross-phosphorylate one another. The activated kinases phosphorylate specific tyrosine residues on the intracellular domains of IFNAR1 and IFNAR2, forming docking sites for the STAT transcription factors. STAT proteins are then phosphorylated by the JAKs, promoting their translocation into the nucleus to regulate expression of interferon-regulated genes. This Oncorhynchus mykiss (Rainbow trout) protein is Interferon alpha/beta receptor 1a.